A 623-amino-acid chain; its full sequence is Phosphoglucomutase, chloroplastic (623 aa).

A chloroplast-targeting transit peptide spans 1 to 63 (MTSTYTRFDT…SSSSSSVVAG (63 aa)). Alpha-D-glucose 1,6-bisphosphate contacts are provided by arginine 88 and serine 181. Catalysis depends on serine 181, which acts as the Phosphoserine intermediate. 4 residues coordinate Mg(2+): serine 181, aspartate 346, aspartate 348, and aspartate 350. Serine 181 carries the post-translational modification Phosphoserine. Residues aspartate 350, arginine 351, threonine 414, glutamate 433, serine 435, and lysine 446 each coordinate alpha-D-glucose 1,6-bisphosphate.

It belongs to the phosphohexose mutase family. As to quaternary structure, monomer. Mg(2+) serves as cofactor. Expressed in flowers, siliques and germinating seeds.

It localises to the plastid. Its subcellular location is the chloroplast. The catalysed reaction is alpha-D-glucose 1-phosphate = alpha-D-glucose 6-phosphate. It catalyses the reaction O-phospho-L-seryl-[protein] + alpha-D-glucose 1-phosphate = alpha-D-glucose 1,6-bisphosphate + L-seryl-[protein]. The enzyme catalyses alpha-D-glucose 1,6-bisphosphate + L-seryl-[protein] = O-phospho-L-seryl-[protein] + alpha-D-glucose 6-phosphate. Inhibited by the Calvin cycle intermediates fructose-1,6-bisphosphate and ribulose-1,5-bisphosphate. Catalyzes the reversible isomerization of alpha-D-glucose 1-phosphate to alpha-D-glucose 6-phosphate. The mechanism proceeds via the intermediate compound alpha-D-glucose 1,6-bisphosphate. This enzyme participates in both the breakdown and synthesis of glucose. Factor that affects seed oil content. Accumulated starch in young embryos may play an important role in providing carbon resources for seed storage lipid biosynthesis in oilseed plants. Promotes gravitropic responses, negative in shoots but positive in roots, by facilitating starch granules (statoliths) formation in hypocotyls and roots columella. In Arabidopsis thaliana (Mouse-ear cress), this protein is Phosphoglucomutase, chloroplastic.